An 80-amino-acid chain; its full sequence is Exodeoxyribonuclease 7 small subunit (80 aa).

The protein belongs to the XseB family. As to quaternary structure, heterooligomer composed of large and small subunits.

It localises to the cytoplasm. It catalyses the reaction Exonucleolytic cleavage in either 5'- to 3'- or 3'- to 5'-direction to yield nucleoside 5'-phosphates.. Functionally, bidirectionally degrades single-stranded DNA into large acid-insoluble oligonucleotides, which are then degraded further into small acid-soluble oligonucleotides. The polypeptide is Exodeoxyribonuclease 7 small subunit (Pseudomonas fluorescens (strain SBW25)).